The primary structure comprises 216 residues: Kynurenine formamidase (216 aa).

Tryptophan 25 contacts substrate. The Zn(2+) site is built by histidine 55, histidine 59, and aspartate 61. Histidine 65 (proton donor/acceptor) is an active-site residue. Histidine 167 and glutamate 179 together coordinate Zn(2+).

This sequence belongs to the Cyclase 1 superfamily. KynB family. In terms of assembly, homodimer. Zn(2+) serves as cofactor.

The catalysed reaction is N-formyl-L-kynurenine + H2O = L-kynurenine + formate + H(+). The protein operates within amino-acid degradation; L-tryptophan degradation via kynurenine pathway; L-kynurenine from L-tryptophan: step 2/2. Its function is as follows. Catalyzes the hydrolysis of N-formyl-L-kynurenine to L-kynurenine, the second step in the kynurenine pathway of tryptophan degradation. The sequence is that of Kynurenine formamidase from Cupriavidus necator (strain ATCC 17699 / DSM 428 / KCTC 22496 / NCIMB 10442 / H16 / Stanier 337) (Ralstonia eutropha).